Reading from the N-terminus, the 1075-residue chain is Protein EXPORTIN 1A (1075 aa).

Residues 37 to 103 (ADQILRDLQA…KNYISEVIVQ (67 aa)) enclose the Importin N-terminal domain. HEAT repeat units lie at residues 91-130 (DGMK…QIVK), 135-171 (AKWT…EVFD), 232-267 (IFES…LNFG), 336-373 (SLLL…ELFD), 388-425 (MGLQ…LMIN), 474-513 (DTEK…SMAE), 563-600 (KFLK…KCKR), 612-649 (PFVS…AESD), 682-719 (LKDQ…IFLD), 756-793 (RETL…DYAR), 798-835 (ARES…CTLE), and 894-934 (ETGL…VLTD).

Belongs to the exportin family. Interacts with RAN1. In terms of tissue distribution, expressed ubiquitously, with higher levels in stems, inflorescences and roots. Present in mature pollen grains, unpollinated pistils, and 2-week-old seedlings.

Its subcellular location is the nucleus. It localises to the nuclear pore complex. The protein localises to the nucleus membrane. Its function is as follows. Receptor for the leucine-rich nuclear export signal (NES). Binds cooperatively to the NES on its target protein and to the small GTPase Ran in its active GTP-bound form. Required for the maternal-to-embryonic transition and during gametophyte development. Involved in heat-induced oxidative stress basal resistance. This Arabidopsis thaliana (Mouse-ear cress) protein is Protein EXPORTIN 1A.